Here is a 272-residue protein sequence, read N- to C-terminus: Orotidine 5'-phosphate decarboxylase (272 aa).

Catalysis depends on lysine 93, which acts as the Proton donor.

The protein belongs to the OMP decarboxylase family. Type 2 subfamily.

The enzyme catalyses orotidine 5'-phosphate + H(+) = UMP + CO2. It participates in pyrimidine metabolism; UMP biosynthesis via de novo pathway; UMP from orotate: step 2/2. In Roseiflexus castenholzii (strain DSM 13941 / HLO8), this protein is Orotidine 5'-phosphate decarboxylase.